The sequence spans 141 residues: Fluoride-specific ion channel FluC 1 (141 aa).

The next 4 helical transmembrane spans lie at 12–32, 44–64, 79–99, and 107–127; these read LYAL…LVGV, WATL…AAIA, FVMT…LETF, and ALAA…AVWL. Positions 86 and 89 each coordinate Na(+).

It belongs to the fluoride channel Fluc/FEX (TC 1.A.43) family.

It localises to the cell inner membrane. It carries out the reaction fluoride(in) = fluoride(out). With respect to regulation, na(+) is not transported, but it plays an essential structural role and its presence is essential for fluoride channel function. In terms of biological role, fluoride-specific ion channel. Important for reducing fluoride concentration in the cell, thus reducing its toxicity. The polypeptide is Fluoride-specific ion channel FluC 1 (Rhodopseudomonas palustris (strain BisB18)).